The sequence spans 371 residues: tRNA-specific 2-thiouridylase MnmA (371 aa).

ATP contacts are provided by residues 14–21 (GMSGGVDS) and Met-40. Positions 100–102 (NPD) are interaction with target base in tRNA. Cys-105 (nucleophile) is an active-site residue. Residues Cys-105 and Cys-205 are joined by a disulfide bond. Gly-129 contributes to the ATP binding site. The tract at residues 155–157 (KDQ) is interaction with tRNA. Cys-205 acts as the Cysteine persulfide intermediate in catalysis. The interaction with tRNA stretch occupies residues 321-322 (RY).

The protein belongs to the MnmA/TRMU family.

It localises to the cytoplasm. The catalysed reaction is S-sulfanyl-L-cysteinyl-[protein] + uridine(34) in tRNA + AH2 + ATP = 2-thiouridine(34) in tRNA + L-cysteinyl-[protein] + A + AMP + diphosphate + H(+). In terms of biological role, catalyzes the 2-thiolation of uridine at the wobble position (U34) of tRNA, leading to the formation of s(2)U34. This is tRNA-specific 2-thiouridylase MnmA from Bordetella pertussis (strain Tohama I / ATCC BAA-589 / NCTC 13251).